The sequence spans 24 residues: Brevinin-1 (24 aa).

A disulfide bridge links Cys-18 with Cys-24.

This sequence belongs to the frog skin active peptide (FSAP) family. Brevinin subfamily. Expressed by the skin glands.

It localises to the secreted. In terms of biological role, shows antibacterial activity against representative Gram-negative and Gram-positive bacterial species, and a very high hemolytic activity. The chain is Brevinin-1 from Pelophylax porosus brevipodus (Nagoya Daruma pond frog).